Consider the following 189-residue polypeptide: dTTP/UTP pyrophosphatase (189 aa).

D64 functions as the Proton acceptor in the catalytic mechanism.

This sequence belongs to the Maf family. YhdE subfamily. A divalent metal cation is required as a cofactor.

The protein localises to the cytoplasm. It catalyses the reaction dTTP + H2O = dTMP + diphosphate + H(+). The enzyme catalyses UTP + H2O = UMP + diphosphate + H(+). Nucleoside triphosphate pyrophosphatase that hydrolyzes dTTP and UTP. May have a dual role in cell division arrest and in preventing the incorporation of modified nucleotides into cellular nucleic acids. This is dTTP/UTP pyrophosphatase from Syntrophomonas wolfei subsp. wolfei (strain DSM 2245B / Goettingen).